A 1081-amino-acid polypeptide reads, in one-letter code: Carbamoyl phosphate synthase large chain (1081 aa).

The tract at residues 1–410 (MPKRTDIKTI…SFQKALRGLE (410 aa)) is carboxyphosphate synthetic domain. ATP-binding residues include arginine 129, arginine 176, glycine 182, glycine 183, glutamate 215, leucine 217, glutamate 222, glycine 248, isoleucine 249, histidine 250, glutamine 292, and glutamate 306. Positions 133 to 335 (KEAMTKIGLG…IAKVAAKLAV (203 aa)) constitute an ATP-grasp 1 domain. The Mg(2+) site is built by glutamine 292, glutamate 306, and asparagine 308. 3 residues coordinate Mn(2+): glutamine 292, glutamate 306, and asparagine 308. The segment at 411-558 (VGVDGLDEKS…YEAEHGECEA (148 aa)) is oligomerization domain. The tract at residues 559 to 944 (DPTERKKIMV…ALFKSQLAAG (386 aa)) is carbamoyl phosphate synthetic domain. In terms of domain architecture, ATP-grasp 2 spans 683 to 878 (QKLLHDLGLR…LAKVAARCMA (196 aa)). Positions 719, 758, 760, 765, 790, 791, 792, 793, 833, and 849 each coordinate ATP. Mg(2+) is bound by residues glutamine 833, glutamate 849, and asparagine 851. Positions 833, 849, and 851 each coordinate Mn(2+). The region spanning 945–1081 (SRLPEKGTVL…YDLQGLHASL (137 aa)) is the MGS-like domain. An allosteric domain region spans residues 945-1081 (SRLPEKGTVL…YDLQGLHASL (137 aa)).

This sequence belongs to the CarB family. In terms of assembly, composed of two chains; the small (or glutamine) chain promotes the hydrolysis of glutamine to ammonia, which is used by the large (or ammonia) chain to synthesize carbamoyl phosphate. Tetramer of heterodimers (alpha,beta)4. The cofactor is Mg(2+). It depends on Mn(2+) as a cofactor.

The enzyme catalyses hydrogencarbonate + L-glutamine + 2 ATP + H2O = carbamoyl phosphate + L-glutamate + 2 ADP + phosphate + 2 H(+). It carries out the reaction hydrogencarbonate + NH4(+) + 2 ATP = carbamoyl phosphate + 2 ADP + phosphate + 2 H(+). The protein operates within amino-acid biosynthesis; L-arginine biosynthesis; carbamoyl phosphate from bicarbonate: step 1/1. Its pathway is pyrimidine metabolism; UMP biosynthesis via de novo pathway; (S)-dihydroorotate from bicarbonate: step 1/3. Large subunit of the glutamine-dependent carbamoyl phosphate synthetase (CPSase). CPSase catalyzes the formation of carbamoyl phosphate from the ammonia moiety of glutamine, carbonate, and phosphate donated by ATP, constituting the first step of 2 biosynthetic pathways, one leading to arginine and/or urea and the other to pyrimidine nucleotides. The large subunit (synthetase) binds the substrates ammonia (free or transferred from glutamine from the small subunit), hydrogencarbonate and ATP and carries out an ATP-coupled ligase reaction, activating hydrogencarbonate by forming carboxy phosphate which reacts with ammonia to form carbamoyl phosphate. The protein is Carbamoyl phosphate synthase large chain of Ralstonia nicotianae (strain ATCC BAA-1114 / GMI1000) (Ralstonia solanacearum).